Reading from the N-terminus, the 499-residue chain is uncharacterized protein (499 aa).

The RING-type; degenerate zinc finger occupies Cys10–Arg57. The B box-type; degenerate zinc finger occupies Asn101–Ile147.

This is an uncharacterized protein from Caenorhabditis elegans.